The sequence spans 217 residues: UPF0502 protein ETA_20480 (217 aa).

Residues 169 to 188 (GEVDESSRADGHHPDDHRGD) form a disordered region. The span at 173–188 (ESSRADGHHPDDHRGD) shows a compositional bias: basic and acidic residues.

The protein belongs to the UPF0502 family.

This chain is UPF0502 protein ETA_20480, found in Erwinia tasmaniensis (strain DSM 17950 / CFBP 7177 / CIP 109463 / NCPPB 4357 / Et1/99).